A 762-amino-acid chain; its full sequence is Probable inorganic carbon transporter subunit DabA (762 aa).

Residues Cys279, Asp281, His461, and Cys476 each contribute to the Zn(2+) site.

The protein belongs to the inorganic carbon transporter (TC 9.A.2) DabA family. In terms of assembly, forms a complex with DabB. Zn(2+) serves as cofactor.

Its subcellular location is the cell inner membrane. In terms of biological role, part of an energy-coupled inorganic carbon pump. The polypeptide is Probable inorganic carbon transporter subunit DabA (Legionella pneumophila subsp. pneumophila (strain Philadelphia 1 / ATCC 33152 / DSM 7513)).